A 342-amino-acid polypeptide reads, in one-letter code: P21 prophage-derived major head protein (342 aa).

The protein belongs to the lambda phage major capsid protein family.

The protein is P21 prophage-derived major head protein of Escherichia coli O6:H1 (strain CFT073 / ATCC 700928 / UPEC).